We begin with the raw amino-acid sequence, 190 residues long: Potassium-transporting ATPase KdpC subunit (190 aa).

The chain crosses the membrane as a helical span at residues 10–30 (TFIFLLLITGGVYPLLTTVLG).

It belongs to the KdpC family. The system is composed of three essential subunits: KdpA, KdpB and KdpC.

The protein localises to the cell inner membrane. Its function is as follows. Part of the high-affinity ATP-driven potassium transport (or Kdp) system, which catalyzes the hydrolysis of ATP coupled with the electrogenic transport of potassium into the cytoplasm. This subunit acts as a catalytic chaperone that increases the ATP-binding affinity of the ATP-hydrolyzing subunit KdpB by the formation of a transient KdpB/KdpC/ATP ternary complex. The chain is Potassium-transporting ATPase KdpC subunit from Escherichia coli (strain SE11).